Reading from the N-terminus, the 165-residue chain is C-phycoerythrin class 2 subunit alpha (165 aa).

Phycourobilin is bound by residues Cys-75, Cys-83, and Cys-140.

The protein belongs to the phycobiliprotein family. In terms of assembly, heterodimer of an alpha and a beta chain. Contains three covalently linked phycourobilin chromophores.

Its subcellular location is the cellular thylakoid membrane. Its function is as follows. Light-harvesting photosynthetic bile pigment-protein from the phycobiliprotein complex. This is C-phycoerythrin class 2 subunit alpha (mpeA) from Synechococcus sp. (strain WH8103).